Here is a 127-residue protein sequence, read N- to C-terminus: Protein ApaG (127 aa).

The ApaG domain maps to 3–127; sequence DQPPTEIQIS…FRLAAATVFH (125 aa).

The protein is Protein ApaG of Acidithiobacillus ferrooxidans (strain ATCC 23270 / DSM 14882 / CIP 104768 / NCIMB 8455) (Ferrobacillus ferrooxidans (strain ATCC 23270)).